A 53-amino-acid chain; its full sequence is Large ribosomal subunit protein eL40 (53 aa).

The protein belongs to the eukaryotic ribosomal protein eL40 family.

This is Large ribosomal subunit protein eL40 from Pyrobaculum islandicum (strain DSM 4184 / JCM 9189 / GEO3).